We begin with the raw amino-acid sequence, 102 residues long: Glutaredoxin (102 aa).

The region spanning 3–102 (MTKTKELVSS…VPLLTEAGAV (100 aa)) is the Glutaredoxin domain. C23 and C26 are joined by a disulfide.

This sequence belongs to the glutaredoxin family. CPYC subfamily.

Its subcellular location is the cytoplasm. Has a glutathione-disulfide oxidoreductase activity in the presence of NADPH and glutathione reductase. Reduces low molecular weight disulfides and proteins. In Ricinus communis (Castor bean), this protein is Glutaredoxin.